A 225-amino-acid chain; its full sequence is NAD(P)H-quinone oxidoreductase subunit K, chloroplastic (225 aa).

Residues cysteine 43, cysteine 44, cysteine 108, and cysteine 139 each contribute to the [4Fe-4S] cluster site.

The protein belongs to the complex I 20 kDa subunit family. In terms of assembly, NDH is composed of at least 16 different subunits, 5 of which are encoded in the nucleus. Requires [4Fe-4S] cluster as cofactor.

It is found in the plastid. Its subcellular location is the chloroplast thylakoid membrane. It carries out the reaction a plastoquinone + NADH + (n+1) H(+)(in) = a plastoquinol + NAD(+) + n H(+)(out). It catalyses the reaction a plastoquinone + NADPH + (n+1) H(+)(in) = a plastoquinol + NADP(+) + n H(+)(out). Its function is as follows. NDH shuttles electrons from NAD(P)H:plastoquinone, via FMN and iron-sulfur (Fe-S) centers, to quinones in the photosynthetic chain and possibly in a chloroplast respiratory chain. The immediate electron acceptor for the enzyme in this species is believed to be plastoquinone. Couples the redox reaction to proton translocation, and thus conserves the redox energy in a proton gradient. The protein is NAD(P)H-quinone oxidoreductase subunit K, chloroplastic of Fagopyrum esculentum subsp. ancestrale (Wild buckwheat).